The following is a 258-amino-acid chain: Apolipoprotein A-I (258 aa).

Positions 1–18 (MKFLVLALTILLAAGTQA) are cleaved as a signal peptide. A 3 X approximate tandem repeats region spans residues 32 to 63 (VKAALNMYIAQVKLTAQRSIDLLDDTEYKEYK). Repeat copies occupy residues 64–85 (MQLS…KSWP) and 86–106 (PTPR…AEVM). A 10 X approximate tandem repeats region spans residues 64–258 (MQLSQSLDNL…WLSTRPSARP (195 aa)). A 3; half-length repeat occupies 107-117 (KDVEDVRTQLE). 7 repeat units span residues 118–139 (PKRA…KKLE), 140–161 (PLIK…AKID), 162–183 (PVVE…TKLM), 184–205 (PIVE…TLAA), 206–227 (PYAE…EKVA), 228–238 (PLSEDFKARWA), and 239–258 (PPPR…SARP). The interval 233 to 258 (FKARWAPPPRRPSKSSWLSTRPSARP) is disordered. Residues 246-258 (KSSWLSTRPSARP) show a composition bias toward polar residues.

Belongs to the apolipoprotein A1/A4/E family. In terms of tissue distribution, major protein of plasma HDL, also found in chylomicrons. Expressed in liver, intestine and muscle.

It localises to the secreted. In terms of biological role, participates in the reverse transport of cholesterol from tissues to the liver for excretion by promoting cholesterol efflux from tissues and by acting as a cofactor for the lecithin cholesterol acyltransferase (LCAT). The protein is Apolipoprotein A-I (apoa1) of Salmo salar (Atlantic salmon).